The primary structure comprises 230 residues: Ribonuclease 3 (230 aa).

An RNase III domain is found at 6–135 (TTELKERYGI…FLGALYLDQK (130 aa)). Position 48 (E48) interacts with Mg(2+). D52 is an active-site residue. D121 and E124 together coordinate Mg(2+). E124 is an active-site residue. The DRBM domain occupies 161 to 230 (DHKTQLQEVL…AERALKSIPQ (70 aa)).

Belongs to the ribonuclease III family. In terms of assembly, homodimer. Mg(2+) serves as cofactor.

Its subcellular location is the cytoplasm. The enzyme catalyses Endonucleolytic cleavage to 5'-phosphomonoester.. Its function is as follows. Digests double-stranded RNA. Involved in the processing of primary rRNA transcript to yield the immediate precursors to the large and small rRNAs (23S and 16S). Processes some mRNAs, and tRNAs when they are encoded in the rRNA operon. Processes pre-crRNA and tracrRNA of type II CRISPR loci if present in the organism. In Enterococcus faecalis (strain ATCC 700802 / V583), this protein is Ribonuclease 3.